The primary structure comprises 238 residues: Ribosomal RNA small subunit methyltransferase G (238 aa).

Residues G77, F82, 128 to 129, and R147 contribute to the S-adenosyl-L-methionine site; that span reads AE.

It belongs to the methyltransferase superfamily. RNA methyltransferase RsmG family.

It localises to the cytoplasm. Specifically methylates the N7 position of guanine in position 535 of 16S rRNA. In Geobacillus kaustophilus (strain HTA426), this protein is Ribosomal RNA small subunit methyltransferase G.